The following is a 564-amino-acid chain: Malignant brain tumor repeat protein 1 (564 aa).

MBT repeat units follow at residues 64–176, 205–327, 331–442, and 450–549; these read FTWS…MKWL, RPTE…TKAT, LEHS…LDRL, and FKWE…LRHP.

Interacts with histone H3 that is trimethylated at 'Lys-9' (H3K9me3).

The sequence is that of Malignant brain tumor repeat protein 1 (mbtr-1) from Caenorhabditis elegans.